Here is a 141-residue protein sequence, read N- to C-terminus: uncharacterized protein (141 aa).

Helical transmembrane passes span 32-52, 69-89, and 109-129; these read LIVLIFSILIAISAYISTSII, IIALISTFIGGIVAWLIIAGF, and FTGYGFLPNIVGALITIPIAY.

Its subcellular location is the cell membrane. This is an uncharacterized protein from Methanocaldococcus jannaschii (strain ATCC 43067 / DSM 2661 / JAL-1 / JCM 10045 / NBRC 100440) (Methanococcus jannaschii).